Reading from the N-terminus, the 1788-residue chain is Laminin subunit beta-1 (1788 aa).

A signal peptide spans 1–24 (MLELRLIVVIVLALLSWQWDPVDS). Residues 23-43 (DSQRPPQHGRRDRPKYPPNKF) are disordered. The region spanning 50–287 (ERSSCYPATG…GISNMVVRGS (238 aa)) is the Laminin N-terminal domain. 3 N-linked (GlcNAc...) asparagine glycosylation sites follow: Asn138, Asn201, and Asn232. 19 disulfide bridges follow: Cys288-Cys297, Cys290-Cys318, Cys320-Cys329, Cys332-Cys352, Cys355-Cys364, Cys357-Cys382, Cys385-Cys394, Cys397-Cys415, Cys418-Cys431, Cys420-Cys446, Cys448-Cys457, Cys460-Cys475, Cys478-Cys491, Cys480-Cys498, Cys500-Cys509, Cys512-Cys526, Cys529-Cys541, Cys531-Cys548, and Cys550-Cys559. Laminin EGF-like domains are found at residues 288 to 354 (CSCY…ACKK), 355 to 417 (CECN…VCQP), 418 to 477 (CDCD…GCEP), and 478 to 528 (CTCN…GCSL). Asn487 carries N-linked (GlcNAc...) asparagine glycosylation. Positions 529–559 (CNCDAGGSYDNYCDVISGQCRCRPHMTGRSC) constitute a Laminin EGF-like 5; truncated domain. The region spanning 567–783 (FIPLLPEVHE…LDNILSVFVH (217 aa)) is the Laminin IV type B domain. N-linked (GlcNAc...) asparagine glycosylation is present at Asn591. A Cell attachment site motif is present at residues 641 to 643 (RGD). Intrachain disulfides connect Cys789/Cys801, Cys791/Cys808, Cys810/Cys819, Cys822/Cys834, Cys837/Cys849, Cys839/Cys856, Cys858/Cys867, Cys870/Cys880, Cys883/Cys892, Cys885/Cys899, Cys902/Cys911, Cys914/Cys930, Cys933/Cys949, Cys935/Cys960, Cys962/Cys971, Cys974/Cys988, Cys991/Cys1005, Cys993/Cys1012, Cys1015/Cys1024, Cys1027/Cys1040, Cys1043/Cys1057, Cys1045/Cys1064, Cys1066/Cys1075, Cys1078/Cys1091, Cys1094/Cys1106, Cys1096/Cys1113, Cys1115/Cys1124, Cys1127/Cys1139, Cys1142/Cys1154, Cys1144/Cys1161, Cys1163/Cys1172, and Cys1175/Cys1186. 8 consecutive Laminin EGF-like domains span residues 789 to 836 (CNCN…GCKA), 837 to 882 (CDCN…ECRV), 883 to 932 (CQCN…GCRP), 933 to 990 (CRCP…TCSK), 991 to 1042 (CECS…NCQQ), 1043 to 1093 (CECD…GCES), 1094 to 1141 (CNCD…KCQP), and 1142 to 1188 (CECD…HCSP). Asn1051 carries N-linked (GlcNAc...) asparagine glycosylation. The segment at 1189–1405 (CGECFNNWDL…SQIPELNNQV (217 aa)) is domain II. N-linked (GlcNAc...) asparagine glycans are attached at residues Asn1246, Asn1301, Asn1330, and Asn1341. The stretch at 1255–1405 (EKLDYETQSL…SQIPELNNQV (151 aa)) forms a coiled coil. A domain alpha region spans residues 1406 to 1432 (CGKPGDPCDSLCGGAGCGHCGGFLSCE). The tract at residues 1433-1788 (HGAKTHSEEA…RGSHYRQCYT (356 aa)) is domain I. Residues 1453 to 1505 (ITSKKDQADQTIRALTQAKLNASEAYEKAKRGFEQSERYLNQTNANIKLAENL) are a coiled coil. Residues Asn1473, Asn1493, and Asn1515 are each glycosylated (N-linked (GlcNAc...) asparagine). Residues 1540–1561 (EEIETLGDQINRAVSSLKNVEA) are a coiled coil. Asn1581, Asn1644, and Asn1703 each carry an N-linked (GlcNAc...) asparagine glycan. A coiled-coil region spans residues 1608-1762 (QGKAKDAIQQ…QQLLRLQAEI (155 aa)). Residues 1690-1719 (GEANNLQSATSATNQTLTDRASRSENARER) are disordered. A compositionally biased stretch (polar residues) spans 1693–1708 (NNLQSATSATNQTLTD). Over residues 1709 to 1719 (RASRSENARER) the composition is skewed to basic and acidic residues.

As to quaternary structure, laminin is a complex glycoprotein, consisting of three different polypeptide chains (alpha, beta, gamma), which are bound to each other by disulfide bonds into a cross-shaped molecule comprising one long and three short arms with globules at each end. Found in the basement membranes (major component).

The protein localises to the secreted. Its subcellular location is the extracellular space. It localises to the extracellular matrix. The protein resides in the basement membrane. Binding to cells via a high affinity receptor, laminin is thought to mediate the attachment, migration and organization of cells into tissues during embryonic development by interacting with other extracellular matrix components. Required for Ndg localization to the basement membrane. The polypeptide is Laminin subunit beta-1 (LanB1) (Drosophila melanogaster (Fruit fly)).